The sequence spans 391 residues: MVRISGFCCAMSLAERQAALLVLADGSVFHGYACGAAGTVIGEVVFNTGMTGYQEVLTDPSYCGQIVSFTYPELGNTGVNPEDEESARPQVSGLIARNVARRHSNWRADRSLPDYLQQHNIVGIYGIDTRALTQHLRSTGAMNGGISTTILDPEELWAEVKAAPSMEGLNLVDQVTTDRPYEWQTPTSQTWEFIEGPTTESLTVVAIDFGVKRNILRRLASYGCRVIVVPADTPIEEILRHEPDGVFLSNGPGDPATVKNGISTAQALLQTGLPLFGICLGHQILGSALGAQTFKLKFGHRGLNHPCGLSQQVEITGQNHGFAIAADSLGPDVEVTHLNLNDRTVAGLRHRHLPVFSVQYHPEASPGPHDSDYLFEQFVALMRDRQPTPVA.

The tract at residues 1–199 is CPSase; that stretch reads MVRISGFCCA…TWEFIEGPTT (199 aa). Positions 61, 251, and 253 each coordinate L-glutamine. Residues 203–388 form the Glutamine amidotransferase type-1 domain; sequence TVVAIDFGVK…VALMRDRQPT (186 aa). The active-site Nucleophile is C279. 5 residues coordinate L-glutamine: L280, Q283, N319, G321, and F322. Active-site residues include H361 and E363.

This sequence belongs to the CarA family. Composed of two chains; the small (or glutamine) chain promotes the hydrolysis of glutamine to ammonia, which is used by the large (or ammonia) chain to synthesize carbamoyl phosphate. Tetramer of heterodimers (alpha,beta)4.

The catalysed reaction is hydrogencarbonate + L-glutamine + 2 ATP + H2O = carbamoyl phosphate + L-glutamate + 2 ADP + phosphate + 2 H(+). It carries out the reaction L-glutamine + H2O = L-glutamate + NH4(+). Its pathway is amino-acid biosynthesis; L-arginine biosynthesis; carbamoyl phosphate from bicarbonate: step 1/1. It participates in pyrimidine metabolism; UMP biosynthesis via de novo pathway; (S)-dihydroorotate from bicarbonate: step 1/3. Small subunit of the glutamine-dependent carbamoyl phosphate synthetase (CPSase). CPSase catalyzes the formation of carbamoyl phosphate from the ammonia moiety of glutamine, carbonate, and phosphate donated by ATP, constituting the first step of 2 biosynthetic pathways, one leading to arginine and/or urea and the other to pyrimidine nucleotides. The small subunit (glutamine amidotransferase) binds and cleaves glutamine to supply the large subunit with the substrate ammonia. The protein is Carbamoyl phosphate synthase small chain of Synechococcus sp. (strain ATCC 27144 / PCC 6301 / SAUG 1402/1) (Anacystis nidulans).